The sequence spans 153 residues: Probable inactive ribonuclease-like protein 13 (153 aa).

The N-terminal stretch at 1-22 is a signal peptide; the sequence is MAPDVAWLLVLPLVFRPTLVTG.

Belongs to the pancreatic ribonuclease family.

The protein resides in the secreted. Functionally, does not exhibit any ribonuclease activity. In Mus musculus (Mouse), this protein is Probable inactive ribonuclease-like protein 13 (Rnase13).